The primary structure comprises 473 residues: GTPase Der (473 aa).

EngA-type G domains lie at 5 to 170 (PVVA…PNQE) and 178 to 351 (LKLA…QSSM). GTP is bound by residues 11-18 (GRPNVGKS), 58-62 (DTGGI), 123-126 (NKVD), 184-191 (GRPNVGKS), 231-235 (DTAGV), and 296-299 (NKWD). A KH-like domain is found at 352–436 (FEVSTNRLTQ…PLNVVFKLNE (85 aa)). Residues 438 to 454 (PYANKSDTPTKAKTQQL) are compositionally biased toward polar residues. Residues 438-473 (PYANKSDTPTKAKTQQLRQRERNRAQKFTTKDKKPR) are disordered. Basic and acidic residues predominate over residues 455 to 473 (RQRERNRAQKFTTKDKKPR).

Belongs to the TRAFAC class TrmE-Era-EngA-EngB-Septin-like GTPase superfamily. EngA (Der) GTPase family. In terms of assembly, associates with the 50S ribosomal subunit.

In terms of biological role, GTPase that plays an essential role in the late steps of ribosome biogenesis. In Psychrobacter arcticus (strain DSM 17307 / VKM B-2377 / 273-4), this protein is GTPase Der.